We begin with the raw amino-acid sequence, 260 residues long: Hemin import ATP-binding protein HmuV (260 aa).

The 237-residue stretch at 7–243 folds into the ABC transporter domain; the sequence is IQASNISVTF…ERIEQVYGYS (237 aa). 39–46 provides a ligand contact to ATP; it reads GPNGAGKS.

This sequence belongs to the ABC transporter superfamily. Heme (hemin) importer (TC 3.A.1.14.5) family. The complex is composed of two ATP-binding proteins (HmuV), two transmembrane proteins (HmuU) and a solute-binding protein (HmuT).

The protein resides in the cell inner membrane. Functionally, part of the ABC transporter complex HmuTUV involved in hemin import. Responsible for energy coupling to the transport system. This Vibrio anguillarum (strain ATCC 68554 / 775) (Listonella anguillarum) protein is Hemin import ATP-binding protein HmuV.